The following is a 3948-amino-acid chain: MDASEPIAVIGSACRFPGGSDSPSKLWELLKEPRDLLSKVPPERYNADAFYHADATHHGTTNVRHSYFLSEDPSSFDNNFFNIQPGEAEAIDPQQRLLMEVVYQGLCSAGQTIEGLRGSPTAVYVGVMCDDWSGIITRDLEVFPRYGATGMARSIMSNRISYFFDWHGPSMTIDTACSSSLVAVHQAIQTLRSGESEVAIAAGANLILTPGMYVAESKLSMLSPSGRSKMWDQDVDGYARGEGIAAVVLKPLSAAIRDNDHIDCIIRATGINQDGRTPGLTMPSATAQADLIRSTYARAGLDINKAEDRPQFFHAHGTGTPAGDPREAEAISRAFYSPDNLSKDDKLYVGSIKTIIGHTEGTAGLASLIGTSLAIQNKVIPPNMHLDVLNPKVAPFYNNLEVPTSALEWPETRSGQPRRASINSFGFGGTNAHAIIEAYEPNATAHVSGALFSPLTFSASSEPSLRSLLMSYSEYLKLNPQISLKDLAYSLQTRRSTLAYRVAITASTAENASKQLDAIVDGEQSSSISTRQLSKSSPKILGIFTGQGTQWPRMGARLLEESPFASKRLAELDDALSSLPADDRPTWTLREMILADSESSRVAEAAISQPLCTAVQVVLVDLLRHAGIELSAVVGHSSGEIGAAYAAGLLTARDAIRVAYYRGLYAKLAQSPNGHKGAMMAVGTTFEDAADFCELEAFQGRIQIAAKNSPSSITLSGDEDAIIEAIEIFKDEGKFARQLKVDTAYHSSHVIPCAKPYLEAMNRCGIETATATKTQWYSSVHGGQIMSADSLTTSYWVDNMTSAVLFSPAVAQAWEEGGPYDLAIEVGPHPALKTPALDTIEAISEGRPPYTGVIARGKDDIQQFSNALGFIWTHLGPGSIAFENFESVVSGSKDRPSFIQDLPNYPFDHAKQFMSMSRVSGWFNSIQEAPHPLLGRRCHDRETSHSVQWRNVLSHKEIPWLQGHQLQGQIIFPATGYISMAVEAIKILAEPSSLGLITIEDLSITRALAFADEDASIETLFELRILSRSETEIQAEFCCYSGIPHTHTATMGLNATAQIKASLGTPTSDQLSNIAVDDYDLRPVSVDRFYDFLARLGYNYSWPFRGTTSIRRKANFATGTLEDQSGSNWEDQLMVHPGMLDSSLQTTFAAFCCPGDERLWALHLPTSFRSIAINPYFTSAGIGKQNSFTYQSVAIEERKTSKVLVELNLLSEETGDTFLQIEGMELVPFSPATPANDAVLFSRFDYRLAGPDGELTAAEYSFKPEDYKMALDCERIAFYYLRRLVETITPEEKANTLVHYRHLVDWAAYVVPQVANGGNPHIPASAQQDTHDDIQQLLKKHYERVDIRLLESVGENLPQVIRDSGNILEHMTKDGMLQDVYEQGFGLNLVNQYIAHMTAQIAHRYPRMNILEIGAGTGGSTREILPRLGSAFSTYTYTDVSGGFFDMAQDRFKDYADRMIFKTFDMNISPASQGFTEGAYDLVIASNVLHATLELEDMMKHVRSFLKPGGFLIILETVNNDCLRVGLPMGSLPGWWLGAEHGRRWGPTLTLPQWDSLLSKCGFGGIDTTTPPVHKILPGHVFCAQALDERIEILRSPMEHLATLPETKSTQLAVIGGQTLKVHRMCDQISRRLSSRYSSISRFNSIEELNDTGLPESCTVLSLTELDEPLFANMTYGKLEALKILWKQGGSILWITSGARAENPHSYMTTGVGRCMRFEYPNITLQALDIKQISDRCPELIVDHLLRLEILDKWSKELRSDELLWSLEPEIYIEEETAIIPRLYPYESGNARYNAERRKVIKQADMETDRVVFAEFEGKWEIQHASPLHIAQELPSSSDISARTIQITHLSPATVNIAPGVSAMAWAGVDTASNEPVVAVTHIAESPVSIPAGWCIPLDKLDPVKTLTGVSATLIASSILERLVKGETLVVHDAPPHIRAALDKLAKPVSIAIFYTSSDEAMSKLGARYIDRRSPLRVIRASLPKSASKFISLSQDFGKDETSKVISMCLPRDCETINTAHLFGPRNVAQQSAFEKDVSSSLKKAFEEVGSQVNTTASTDLISLKDTPNPIADQVRFAILDCTDTPIQASVHPIDDGRIFRADKTFLLIGLTGELGQSLCKWMVEQGARSIVLTSRRPNVSEHFLGSFAETGAIVKALPMDVTDRTSIEACLETIKKTLPPIAGVVNGAMVLRDALFENMPYEDFMKVLNPKVVGSQLLDEMFYDTPLDFFIFFSSTTAVMGNSGQSNYIAGNMYMNALAAQRKKRGVAASSIDISSIIGLGYVERAEDLSEDTFIKMGYKPMSEQDLQKLFAEAIVLGRPDCHEVCELVTGVTPIYTDAQASDQYLKDVKFGHFLMERLDTQTYTGKTSTVPVRVQLADVKTRADAVAIIKESFIVRLRRVLAVGPDEIINEKVTLVEQGVDSLMAVEVRSWFIKELDVDIPVLKILGGMSVPDLVDESLDLLSPSILDVSSLEAGNAHPAKPTTVIPQTPTRVTPPESSQGTSDQDKPHTGSDSSRSPIDTPLTSWDRQDLSPPDKSDDAPNSTDNLTPPRTFPNELPSIMSYGQAGFWFLNDYLVNKKAFNMAVMLKLTGSIRTQPLENAVQLVAERHEILRTRFFWSEDGDERTPMQGINPPTMKLTIKTIADEKEAETELKRLHDEDWDLGSGEGVKIILLRLSDQVHFLLSGMHHIYLDGYSFSVFFKDLESAYINHRLPPLPVESQYRTFALQQRKMYDDGDLLKSIEYYRQSFPKEFAPIRLFPFATTASRQLANEYSQHEAKLSITPDVSAKVRQLARANRSTSFHVYLAALKILLFSLLPDTEELFIGIADANRGDKKFMGSLGFFLNLLPLRFQRGKPRSRVSSAIQTARDAAYGALQHSQLPFDVLLRELNVPRSDKHTPIFQVFMDYRQVVQERSSWGGCKLSDEKWCNAGTGYDVALEVTENINTDTLLSLRLQKQLYSEEHTQVLLRSYLSVLEYMIRGSDKSVDAAPAWSSYDLKVAVDAGKAPEFKSKWPPTVSHQIDQVIQNNPDKIALKDGNGNVLTYAQMGNRIDTISKALIDAGTVQGTVVGVFQEPSADWICSLLAIFKAGAVYVPLDLRNSIPRLASIVKASRPSVIITDITTDDKVDLIGAKFVTKLQLGSLDESTRQDSTEINHAKVGSLAVILFTSGSTGEPKGLMMTHTNLLSYAEVSSKTFARVDEDLVVLQQSPFSFDFSLDQTMAALTNGGYLYVVPASKRGDPDEISKIMVEESVTYTTATPSEYDLWLRYSTETLQQCNSWKYAFSGGEAMSYKLAREFGTLKLTNLHVFNGYGPAETTILSHRIDLKYADPDLPDPLPAGYPLPGFSVCIVDDKMRPVPLGVQGEIVLGGPCIVSGYLNMPESTRDKFLPDTFFGTSGTVYRSGDRGRLCYDGLLFCDGRLEGNTMIKLRGFRVELDEVEKTIVSHSAGALSHAVATVRGTEEGRYLVAHIVFAPEFPEQDREGVMKSLRQMLPLPPYMRPSVFQVLPDIPRTAHLKIDRKAIQDIPVQTTQSEISKSLTASEKRLSELWRRVLPLDPGTLTHESDFFLIGGNSILLVKLQALLREGLWMAPKLVTLMGSSTLGAMASVLEDCGPVNVIHWDEEIKFPNDLQLATPLRAAGKSTDINVLLTGSSGYLGRHLLLSLLKDHRVAQVHCLCRTSSDQQVVNDPGSKANIVQSDLAQHNLGIPESTYSQLATEVDVIIHCAANRSFWDRYEALKADNLDSTKELVKFVVSSGRAIPLHFLSSGAVAKYNSGLTPPADGGDGYVATKWASEVFMKQAADSTNLPVFSHRPVACESAQQSEEETISIVNELMQIVKLLGCRPSFDGVGGFVDVMPVNEIVEAIHETALNSQTGEGLCILEHKAHQRAYVRSFATVVESDDGLSKLPCIPILEWFGRAKKAGFSYFLASQDLILGSQLFSRR.

A Ketosynthase family 3 (KS3) domain is found at 4–438; sequence SEPIAVIGSA…GTNAHAIIEA (435 aa). Residues Cys-177, His-316, and His-358 each act as for beta-ketoacyl synthase activity in the active site. The tract at residues 543-846 is malonyl-CoA:ACP transacylase (MAT) domain; sequence IFTGQGTQWP…LDTIEAISEG (304 aa). The N-terminal hotdog fold stretch occupies residues 931–1066; it reads HPLLGRRCHD…AQIKASLGTP (136 aa). The dehydratase (DH) domain stretch occupies residues 931-1233; sequence HPLLGRRCHD…MELVPFSPAT (303 aa). The 305-residue stretch at 931–1235 folds into the PKS/mFAS DH domain; that stretch reads HPLLGRRCHD…LVPFSPATPA (305 aa). The active-site Proton acceptor; for dehydratase activity is the His-964. The interval 1081 to 1235 is C-terminal hotdog fold; it reads LRPVSVDRFY…LVPFSPATPA (155 aa). Asp-1141 functions as the Proton donor; for dehydratase activity in the catalytic mechanism. A methyltransferase (MT) domain region spans residues 1381 to 1578; that stretch reads YEQGFGLNLV…TTPPVHKILP (198 aa). The interval 2105 to 2277 is ketoreductase (KR) domain; sequence TFLLIGLTGE…VAASSIDISS (173 aa). The region spanning 2389–2464 is the Carrier 1 domain; the sequence is AIIKESFIVR…DLVDESLDLL (76 aa). Position 2424 is an O-(pantetheine 4'-phosphoryl)serine (Ser-2424). A disordered region spans residues 2475 to 2555; the sequence is EAGNAHPAKP…TDNLTPPRTF (81 aa). Composition is skewed to polar residues over residues 2487–2505 and 2513–2528; these read VIPQ…QGTS and GSDS…LTSW. Residues 2529-2541 show a composition bias toward basic and acidic residues; it reads DRQDLSPPDKSDD. Polar residues predominate over residues 2542–2551; that stretch reads APNSTDNLTP. Residues 2547–2976 are condensation (C) domain; that stretch reads DNLTPPRTFP…TQVLLRSYLS (430 aa). Positions 3000–3402 are adenylation (A) (KR) domain; that stretch reads LKVAVDAGKA…PDTFFGTSGT (403 aa). Positions 3540-3617 constitute a Carrier 2 domain; sequence KSLTASEKRL…AMASVLEDCG (78 aa). Position 3577 is an O-(pantetheine 4'-phosphoryl)serine (Ser-3577). The tract at residues 3653–3870 is reductase (RED) domain; the sequence is LTGSSGYLGR…MPVNEIVEAI (218 aa).

In the C-terminal section; belongs to the NRP synthetase family.

It carries out the reaction L-serine + 7 malonyl-CoA + acetyl-CoA + 2 S-adenosyl-L-methionine + ATP + 8 NADPH + 11 H(+) = (5S)-3-[(2E,6R,8E,10E,12E)-2,6-dimethyltetradeca-2,8,10,12-tetraenoyl]-5-(hydroxymethyl)pyrrolidine-2,4-dione + AMP + 2 S-adenosyl-L-homocysteine + 7 CO2 + diphosphate + 8 NADP(+) + 8 CoA + 6 H2O. Its pathway is mycotoxin biosynthesis. In terms of biological role, hybrid PKS-NRPS synthetase; part of the gene cluster that mediates the biosynthesis of HIV-1 integrase inhibitor equisetin and of fusarisetin A, both trans-fused decalin-containing tetramic acids showing also antimicrobial activity. The PKS module of fsa1 together with the enoylreductase fsa3 catalyze the formation of the polyketide unit which is then conjugated to L-serine by the condensation domain of the fsa1 NRPS module. Activity of the Dieckmann cyclase domain (RED) results in release of the Dieckmann product intermediate. Diels-Alderase fsa2 is involved in endo-selective Diels-Alder cycloaddition to form the decalin ring, leading to the production of N-desmethylequisetin also called trichosetin. Subsequent N-methylation is carried out by fsa4 to give equisetin. The enzymatic gene responsible for the conversion of equisetin to fusarisetin A has not been identified yet and is probably located outside of the fsa cluster. In Fusarium sp. (strain FN080326), this protein is Hybrid PKS-NRPS synthetase fsa1.